Reading from the N-terminus, the 96-residue chain is Co-chaperonin GroES (96 aa).

This sequence belongs to the GroES chaperonin family. Heptamer of 7 subunits arranged in a ring. Interacts with the chaperonin GroEL.

The protein localises to the cytoplasm. Its function is as follows. Together with the chaperonin GroEL, plays an essential role in assisting protein folding. The GroEL-GroES system forms a nano-cage that allows encapsulation of the non-native substrate proteins and provides a physical environment optimized to promote and accelerate protein folding. GroES binds to the apical surface of the GroEL ring, thereby capping the opening of the GroEL channel. The protein is Co-chaperonin GroES of Alteromonas mediterranea (strain DSM 17117 / CIP 110805 / LMG 28347 / Deep ecotype).